We begin with the raw amino-acid sequence, 239 residues long: Peptidyl-tRNA hydrolase (239 aa).

Y14 is a binding site for tRNA. The Proton acceptor role is filled by H19. F64, N66, and N112 together coordinate tRNA.

It belongs to the PTH family. In terms of assembly, monomer.

It is found in the cytoplasm. It carries out the reaction an N-acyl-L-alpha-aminoacyl-tRNA + H2O = an N-acyl-L-amino acid + a tRNA + H(+). Its function is as follows. Hydrolyzes ribosome-free peptidyl-tRNAs (with 1 or more amino acids incorporated), which drop off the ribosome during protein synthesis, or as a result of ribosome stalling. Catalyzes the release of premature peptidyl moieties from peptidyl-tRNA molecules trapped in stalled 50S ribosomal subunits, and thus maintains levels of free tRNAs and 50S ribosomes. In Rhizobium meliloti (strain 1021) (Ensifer meliloti), this protein is Peptidyl-tRNA hydrolase.